Consider the following 82-residue polypeptide: Beta-neurotoxin Css9 (82 aa).

A signal peptide spans 1 to 17; sequence MKLLMLIVALMIIGVQS. An LCN-type CS-alpha/beta domain is found at 18-81; it reads KDGYPMDHKG…VWDRATNKCR (64 aa). 4 disulfides stabilise this stretch: cysteine 28–cysteine 80, cysteine 32–cysteine 54, cysteine 39–cysteine 61, and cysteine 43–cysteine 63.

Belongs to the long (4 C-C) scorpion toxin superfamily. Sodium channel inhibitor family. Beta subfamily. As to expression, expressed by the venom gland.

It localises to the secreted. In terms of biological role, beta toxins bind voltage-independently at site-4 of sodium channels (Nav) and shift the voltage of activation toward more negative potentials thereby affecting sodium channel activation and promoting spontaneous and repetitive firing. This toxin compete with high affinity with 125I-Css4 bound on rat brain synaptosome and may bind with high affinity to Nav1.1/SCN1A, Nav1.2/SCN2A and Nav1.6/SCN8A. In Centruroides suffusus (Durango bark scorpion), this protein is Beta-neurotoxin Css9.